Here is a 76-residue protein sequence, read N- to C-terminus: Small ribosomal subunit protein bS18 (76 aa).

It belongs to the bacterial ribosomal protein bS18 family. As to quaternary structure, part of the 30S ribosomal subunit. Forms a tight heterodimer with protein bS6.

Its function is as follows. Binds as a heterodimer with protein bS6 to the central domain of the 16S rRNA, where it helps stabilize the platform of the 30S subunit. This is Small ribosomal subunit protein bS18 from Neisseria gonorrhoeae (strain ATCC 700825 / FA 1090).